The following is a 234-amino-acid chain: Sugar fermentation stimulation protein homolog (234 aa).

Belongs to the SfsA family.

This chain is Sugar fermentation stimulation protein homolog, found in Shewanella sp. (strain MR-7).